The chain runs to 330 residues: ADP-L-glycero-D-manno-heptose-6-epimerase (330 aa).

Residues 11–12 (FI), 32–33 (DN), Lys-39, Lys-54, 75–79 (EGACS), and Asn-92 each bind NADP(+). The Proton acceptor role is filled by Tyr-139. Lys-143 contacts NADP(+). Position 168 (Asn-168) interacts with substrate. Residues Val-169 and Lys-177 each coordinate NADP(+). Catalysis depends on Lys-177, which acts as the Proton acceptor. Residues Arg-179, His-186, 200–203 (FGEY), Arg-213, and Tyr-292 each bind substrate.

It belongs to the NAD(P)-dependent epimerase/dehydratase family. HldD subfamily. As to quaternary structure, homopentamer. It depends on NADP(+) as a cofactor.

The catalysed reaction is ADP-D-glycero-beta-D-manno-heptose = ADP-L-glycero-beta-D-manno-heptose. Its pathway is nucleotide-sugar biosynthesis; ADP-L-glycero-beta-D-manno-heptose biosynthesis; ADP-L-glycero-beta-D-manno-heptose from D-glycero-beta-D-manno-heptose 7-phosphate: step 4/4. Functionally, catalyzes the interconversion between ADP-D-glycero-beta-D-manno-heptose and ADP-L-glycero-beta-D-manno-heptose via an epimerization at carbon 6 of the heptose. In Burkholderia pseudomallei (strain 1026b), this protein is ADP-L-glycero-D-manno-heptose-6-epimerase.